The primary structure comprises 556 residues: Glutamine--tRNA ligase (556 aa).

The 'HIGH' region motif lies at 39-49 (PEPNGYLHIGH). Residues 40-42 (EPN) and 46-52 (HIGHAKS) contribute to the ATP site. 2 residues coordinate L-glutamine: D72 and Y217. Residues T236 and 267–268 (RL) each bind ATP. The 'KMSKS' region motif lies at 274 to 278 (LTSKR).

The protein belongs to the class-I aminoacyl-tRNA synthetase family. As to quaternary structure, monomer.

The protein resides in the cytoplasm. It catalyses the reaction tRNA(Gln) + L-glutamine + ATP = L-glutaminyl-tRNA(Gln) + AMP + diphosphate. In Haemophilus ducreyi (strain 35000HP / ATCC 700724), this protein is Glutamine--tRNA ligase.